A 1453-amino-acid chain; its full sequence is NRPS-like tryptophan epimerase fscC (1453 aa).

The adenylation stretch occupies residues serine 37–valine 433. The Carrier domain maps to threonine 544 to threonine 626. Serine 586 is modified (O-(pantetheine 4'-phosphoryl)serine). Positions phenylalanine 639–phenylalanine 1053 are epimerization (E) domain. A condensation region spans residues phenylalanine 1181–glutamine 1391.

This sequence belongs to the NRP synthetase family. Requires pantetheine 4'-phosphate as cofactor.

Its pathway is secondary metabolite biosynthesis. Its function is as follows. NRPS-like tryptophan epimerase; part of the fragmented gene cluster that mediates the biosynthesis of fusarochromene, a tryptophan-derived metabolite closely related to a group of mycotoxins including fusarochromanone. Within the pathway, fscC catalyzes the first step via epimerization of L-tryptophan to provide the intermediate D-tryptophan. D-tryptophan is subsequently hydroxylated by the tryptophan 6-hydroxylase fscE to yield 6-hydroxytryptophan. The pyrrole ring undergoes cleavaged by the tryptophan 2,3-dioxygenase fscD and is finally converted to 4-hydroxykyrunenine by the hydrolase fscH. The NRPS-like oxidoreductase fscA reduces the carboxyl group to primary alcohol and the DMATS-type prenyltransferase fscG performs prenylation, followed by the formation of a chromene ring catalyzed by the oxidoreductase fscI, which leads to desacetylfusarochromene. Epoxidation by fscF and rearrangement reactions of chromene double bonds convert compound desacetylfusarochromene to fusarochromanones. Although specific acetyltransferases were not found near the fsc gene cluster, several predicted enzymes containing the N-acetyltransferase superfamily domain are present in the genome of F.equiseti. These predicted enzymes may have the potential to convert desacetylfusarochromene to fusarochromene. This Fusarium equiseti (Fusarium scirpi) protein is NRPS-like tryptophan epimerase fscC.